The sequence spans 781 residues: Tax1-binding protein 1 homolog A (781 aa).

Coiled coils occupy residues 148-453 (NSDI…QGDA) and 488-581 (DVEK…YMRE). The span at 441–465 (KLTQQQETQQGDANRNDASTETTLE) shows a compositional bias: polar residues. Disordered stretches follow at residues 441–510 (KLTQ…EEEC) and 630–691 (ETRD…EAPA). Over residues 484 to 495 (TVARDVEKSRDE) the composition is skewed to basic and acidic residues. The segment covering 496–510 (EGNEQEEEDEEEEEC) has biased composition (acidic residues). Residues 646-656 (RPPPLAPPPWG) are compositionally biased toward pro residues. UBZ1-type zinc fingers lie at residues 716 to 742 (HKQC…VESH) and 743 to 769 (WRVC…VHTH). Zn(2+) contacts are provided by cysteine 719, cysteine 722, histidine 738, histidine 742, cysteine 746, cysteine 749, histidine 765, and histidine 769.

Little expression is observed during pectoral fin development, except for an elevated level of expression in the distal mesenchyme cells of some samples.

Functionally, may have anti-apoptotic activity. This chain is Tax1-binding protein 1 homolog A, found in Danio rerio (Zebrafish).